Here is a 174-residue protein sequence, read N- to C-terminus: Major allergen Can f 1 (174 aa).

The signal sequence occupies residues 1-18 (MKTLLLTIGFSLIAILQA). C78 and C169 are disulfide-bonded. The N-linked (GlcNAc...) asparagine glycan is linked to N80.

Belongs to the calycin superfamily. Lipocalin family. As to expression, tongue epithelial tissue.

The protein resides in the secreted. This Canis lupus familiaris (Dog) protein is Major allergen Can f 1.